Consider the following 2289-residue polypeptide: Protein Ycf2 (2289 aa).

An ATP-binding site is contributed by 1643–1650 (GSIGTGRS).

Belongs to the Ycf2 family.

It is found in the plastid. The protein resides in the chloroplast stroma. Probable ATPase of unknown function. Its presence in a non-photosynthetic plant (Epifagus virginiana) and experiments in tobacco indicate that it has an essential function which is probably not related to photosynthesis. This Aethionema grandiflorum (Persian stone-cress) protein is Protein Ycf2.